The sequence spans 395 residues: Acetate kinase (395 aa).

N10 lines the Mg(2+) pocket. K17 contributes to the ATP binding site. Position 87 (R87) interacts with substrate. D144 acts as the Proton donor/acceptor in catalysis. ATP contacts are provided by residues 204 to 208, 279 to 281, and 327 to 331; these read HLGNG, DMR, and GIGEN. Residue E381 participates in Mg(2+) binding.

This sequence belongs to the acetokinase family. In terms of assembly, homodimer. The cofactor is Mg(2+). Mn(2+) serves as cofactor.

The protein localises to the cytoplasm. It catalyses the reaction acetate + ATP = acetyl phosphate + ADP. It functions in the pathway metabolic intermediate biosynthesis; acetyl-CoA biosynthesis; acetyl-CoA from acetate: step 1/2. In terms of biological role, catalyzes the formation of acetyl phosphate from acetate and ATP. Can also catalyze the reverse reaction. The polypeptide is Acetate kinase (Stutzerimonas stutzeri (strain A1501) (Pseudomonas stutzeri)).